We begin with the raw amino-acid sequence, 158 residues long: Large ribosomal subunit protein bL17 (158 aa).

Positions Ala119–Glu158 are disordered. Over residues Ala126 to Glu158 the composition is skewed to basic and acidic residues.

This sequence belongs to the bacterial ribosomal protein bL17 family. Part of the 50S ribosomal subunit. Contacts protein L32.

This chain is Large ribosomal subunit protein bL17, found in Anaeromyxobacter sp. (strain K).